Reading from the N-terminus, the 154-residue chain is MTKTDVSGLSQLGTKVDLPQNPEEAVLERVPSGHGGTDFVVRFTAPEFTSLCPMTGQPDFAHLVIDYVPDGWLVESKSLKLFLHSFRNHGAFHEDCTIDIAKRLVSLLSPKWLRIGAYWYPRGGIPIDVFWQTGSPPEGVWLPDQGVPTYRGRG.

The active-site Thioimide intermediate is Cys52. The Proton donor role is filled by Asp59. Substrate is bound by residues 74 to 76 and 93 to 94; these read VES and HE.

Belongs to the GTP cyclohydrolase I family. QueF type 1 subfamily.

It is found in the cytoplasm. The catalysed reaction is 7-aminomethyl-7-carbaguanine + 2 NADP(+) = 7-cyano-7-deazaguanine + 2 NADPH + 3 H(+). The protein operates within tRNA modification; tRNA-queuosine biosynthesis. Functionally, catalyzes the NADPH-dependent reduction of 7-cyano-7-deazaguanine (preQ0) to 7-aminomethyl-7-deazaguanine (preQ1). This Sinorhizobium medicae (strain WSM419) (Ensifer medicae) protein is NADPH-dependent 7-cyano-7-deazaguanine reductase.